The following is a 501-amino-acid chain: Lysine--tRNA ligase (501 aa).

Positions 402 and 409 each coordinate Mg(2+).

This sequence belongs to the class-II aminoacyl-tRNA synthetase family. As to quaternary structure, homodimer. Mg(2+) serves as cofactor.

The protein resides in the cytoplasm. The catalysed reaction is tRNA(Lys) + L-lysine + ATP = L-lysyl-tRNA(Lys) + AMP + diphosphate. The polypeptide is Lysine--tRNA ligase (Helicobacter pylori (strain HPAG1)).